The sequence spans 33 residues: Glutaminase-asparaginase (33 aa).

In terms of domain architecture, Asparaginase/glutaminase spans 1–33 (NVVVLATGGTIAGAGTNAFASQXGPLGMVVEGK). T10 functions as the Acyl-ester intermediate in the catalytic mechanism.

Belongs to the asparaginase 1 family. In terms of assembly, homotetramer.

The protein resides in the periplasm. The enzyme catalyses L-glutamine + H2O = L-glutamate + NH4(+). The catalysed reaction is L-asparagine + H2O = L-aspartate + NH4(+). This Delftia acidovorans (Pseudomonas acidovorans) protein is Glutaminase-asparaginase (ansB).